A 485-amino-acid chain; its full sequence is Cyclic GMP-AMP synthase-like receptor (485 aa).

ATP-binding positions include Ser70 and 82–84 (EYD). Mg(2+) contacts are provided by Glu82, Asp84, and Asp204. GTP-binding positions include Asp204 and 247 to 254 (RLSFYEQE). ATP contacts are provided by Lys271 and Lys274. Mn(2+)-binding residues include Ile298 and Asp304.

The protein belongs to the mab-21 family. Mg(2+) serves as cofactor. Requires Mn(2+) as cofactor.

The catalysed reaction is GTP + ATP = 2',3'-cGAMP + 2 diphosphate. The enzyme catalyses GTP + ATP = pppGp(2'-5')A + diphosphate. It carries out the reaction pppGp(2'-5')A = 2',3'-cGAMP + diphosphate. In terms of biological role, nucleotidyltransferase that catalyzes the formation of cyclic GMP-AMP (2',3'-cGAMP) from ATP and GTP and plays a key role in innate immunity. Directly binds some unknown ligand, activating the nucleotidyltransferase activity, leading to synthesis of 2',3'-cGAMP, a second messenger that binds to and activates Sting, thereby triggering the immune response via activation of the NF-kappa-B transcription factor. The protein is Cyclic GMP-AMP synthase-like receptor of Trichogramma pretiosum (Parasitoid wasp).